A 167-amino-acid chain; its full sequence is Leptin (167 aa).

An N-terminal signal peptide occupies residues 1 to 21 (MHWGTLCGFLWLWPYLFYVQA). The cysteines at positions 117 and 167 are disulfide-linked.

This sequence belongs to the leptin family. As to quaternary structure, interacts with SIGLEC6. In terms of tissue distribution, adipose tissue is the main source of leptin. It is also produced by other peripheral tissues such as the skeletal muscle. Expressed by intercalated and striated tracts of submandibular and parotid salivary gland intralobular ducts. Detected by fundic epithelium of the gastric mucosa. Secreted into blood and gastric juice.

It is found in the secreted. Its function is as follows. Key player in the regulation of energy balance and body weight control. Once released into the circulation, has central and peripheral effects by binding LEPR, found in many tissues, which results in the activation of several major signaling pathways. In the hypothalamus, acts as an appetite-regulating factor that induces a decrease in food intake and an increase in energy consumption by inducing anorexinogenic factors and suppressing orexigenic neuropeptides, also regulates bone mass and secretion of hypothalamo-pituitary-adrenal hormones. In the periphery, increases basal metabolism, influences reproductive function, regulates pancreatic beta-cell function and insulin secretion, is pro-angiogenic for endothelial cell and affects innate and adaptive immunity. In the arcuate nucleus of the hypothalamus, activates by depolarization POMC neurons inducing FOS and SOCS3 expression to release anorexigenic peptides and inhibits by hyperpolarization NPY neurons inducing SOCS3 with a consequent reduction on release of orexigenic peptides. In addition to its known satiety inducing effect, has a modulatory role in nutrient absorption. In the intestine, reduces glucose absorption by enterocytes by activating PKC and leading to a sequential activation of p38, PI3K and ERK signaling pathways which exerts an inhibitory effect on glucose absorption. Acts as a growth factor on certain tissues, through the activation of different signaling pathways increases expression of genes involved in cell cycle regulation such as CCND1, via JAK2-STAT3 pathway, or VEGFA, via MAPK1/3 and PI3K-AKT1 pathways. May also play an apoptotic role via JAK2-STAT3 pathway and up-regulation of BIRC5 expression. Pro-angiogenic, has mitogenic activity on vascular endothelial cells and plays a role in matrix remodeling by regulating the expression of matrix metalloproteinases (MMPs) and tissue inhibitors of metalloproteinases (TIMPs). In innate immunity, modulates the activity and function of neutrophils by increasing chemotaxis and the secretion of oxygen radicals. Increases phagocytosis by macrophages and enhances secretion of pro-inflammatory mediators. Increases cytotoxic ability of NK cells. Plays a pro-inflammatory role, in synergy with IL1B, by inducing NOS2 which promotes the production of IL6, IL8 and Prostaglandin E2, through a signaling pathway that involves JAK2, PI3K, MAP2K1/MEK1 and MAPK14/p38. In adaptive immunity, promotes the switch of memory T-cells towards T helper-1 cell immune responses. Increases CD4(+)CD25(-) T-cell proliferation and reduces autophagy during TCR (T-cell receptor) stimulation, through MTOR signaling pathway activation and BCL2 up-regulation. In Homo sapiens (Human), this protein is Leptin.